Reading from the N-terminus, the 1150-residue chain is Serine/threonine-protein phosphatase 2A regulatory subunit B'' subunit alpha (1150 aa).

A disordered region spans residues 661–693; it reads PEVIKIQNKPEKKPGTPLPPPATSPSSPRPLSP. Positions 676-693 are enriched in pro residues; the sequence is TPLPPPATSPSSPRPLSP. 2 consecutive EF-hand domains span residues 758 to 793 and 972 to 1007; these read CPLY…LLNN and RNPT…QCER. Positions 985, 987, 989, and 996 each coordinate Ca(2+). The tract at residues 1105-1132 is disordered; sequence AQFQEGFEDYETDEPASPSEFGNKSNKI.

In terms of assembly, PP2A consists of a common heterodimeric core enzyme, composed of a 36 kDa catalytic subunit (subunit C) and a 65 kDa constant regulatory subunit (PR65 or subunit A), that associates with a variety of regulatory subunits. Proteins that associate with the core dimer include three families of regulatory subunits B (the R2/B/PR55/B55, R3/B''/PR72/PR130/PR59 and R5/B'/B56 families), the 48 kDa variable regulatory subunit, viral proteins, and cell signaling molecules. Expressed in heart, brain, placenta, lung, muscle and kidney.

Functionally, the B regulatory subunit might modulate substrate selectivity and catalytic activity, and might also direct the localization of the catalytic enzyme to a particular subcellular compartment. This chain is Serine/threonine-protein phosphatase 2A regulatory subunit B'' subunit alpha (PPP2R3A), found in Homo sapiens (Human).